Consider the following 591-residue polypeptide: CTP synthase 1-A (591 aa).

The Glutamine amidotransferase type-1 domain maps to 300 to 554 (SIALVGKYTK…LASVGRLSQY (255 aa)). Residues Cys-399, His-526, and Glu-528 each act as for GATase activity in the active site.

Belongs to the CTP synthase family.

The catalysed reaction is UTP + L-glutamine + ATP + H2O = CTP + L-glutamate + ADP + phosphate + 2 H(+). Its pathway is pyrimidine metabolism; CTP biosynthesis via de novo pathway; CTP from UDP: step 2/2. Functionally, this enzyme is involved in the de novo synthesis of CTP, a precursor of DNA, RNA and phospholipids. Catalyzes the ATP-dependent amination of UTP to CTP with either L-glutamine or ammonia as a source of nitrogen. This is CTP synthase 1-A (ctps1-a) from Xenopus laevis (African clawed frog).